Consider the following 433-residue polypeptide: Ribosomal protein uS12 methylthiotransferase RimO (433 aa).

The 117-residue stretch at 6–122 folds into the MTTase N-terminal domain; that stretch reads QSIFLLSLGC…IISVLGGSYR (117 aa). [4Fe-4S] cluster is bound by residues Cys-15, Cys-51, Cys-85, Cys-146, Cys-150, and Cys-153. The 231-residue stretch at 132–362 folds into the Radical SAM core domain; the sequence is LTPPHYAWLK…MELQESIAAE (231 aa). The TRAM domain maps to 365–432; the sequence is RELEGRVMKV…AYELHGRVND (68 aa).

The protein belongs to the methylthiotransferase family. RimO subfamily. [4Fe-4S] cluster serves as cofactor.

The protein localises to the cytoplasm. It catalyses the reaction L-aspartate(89)-[ribosomal protein uS12]-hydrogen + (sulfur carrier)-SH + AH2 + 2 S-adenosyl-L-methionine = 3-methylsulfanyl-L-aspartate(89)-[ribosomal protein uS12]-hydrogen + (sulfur carrier)-H + 5'-deoxyadenosine + L-methionine + A + S-adenosyl-L-homocysteine + 2 H(+). In terms of biological role, catalyzes the methylthiolation of an aspartic acid residue of ribosomal protein uS12. The protein is Ribosomal protein uS12 methylthiotransferase RimO of Prosthecochloris aestuarii (strain DSM 271 / SK 413).